A 112-amino-acid polypeptide reads, in one-letter code: Ig kappa chain V-III region TEPC 124 (112 aa).

The framework-1 stretch occupies residues 1–23; sequence DIVLTQSPASLAVSLGQRATISC. A disulfide bridge links cysteine 23 with cysteine 92. The complementarity-determining-1 stretch occupies residues 24-38; the sequence is RASZSVNWYGNSFMZ. The framework-2 stretch occupies residues 39-53; it reads WYZZKPGZPPKLLIY. Positions 54-60 are complementarity-determining-2; it reads RASNLZS. The framework-3 stretch occupies residues 61–92; sequence GIPARFSGSGSRTBFTLTIBPVZABDVATYFC. The segment at 93–101 is complementarity-determining-3; that stretch reads ZZSBZAPWT. The framework-4 stretch occupies residues 102 to 111; the sequence is FGSGTKLEIK.

The polypeptide is Ig kappa chain V-III region TEPC 124 (Mus musculus (Mouse)).